Here is a 335-residue protein sequence, read N- to C-terminus: tRNA N6-adenosine threonylcarbamoyltransferase (335 aa).

3 residues coordinate a divalent metal cation: H109, H113, and Y130. Substrate-binding positions include 130–134 (YVSGG), D162, G177, E181, and N266. D294 provides a ligand contact to a divalent metal cation.

The protein belongs to the KAE1 / TsaD family. Component of the EKC/KEOPS complex composed of at least GON7, TP53RK, TPRKB, OSGEP and LAGE3; the whole complex dimerizes. A divalent metal cation is required as a cofactor.

The protein localises to the cytoplasm. The protein resides in the nucleus. It catalyses the reaction L-threonylcarbamoyladenylate + adenosine(37) in tRNA = N(6)-L-threonylcarbamoyladenosine(37) in tRNA + AMP + H(+). In terms of biological role, component of the EKC/KEOPS complex that is required for the formation of a threonylcarbamoyl group on adenosine at position 37 (t(6)A37) in tRNAs that read codons beginning with adenine. The complex is probably involved in the transfer of the threonylcarbamoyl moiety of threonylcarbamoyl-AMP (TC-AMP) to the N6 group of A37. OSGEP likely plays a direct catalytic role in this reaction, but requires other protein(s) of the complex to fulfill this activity. The chain is tRNA N6-adenosine threonylcarbamoyltransferase from Bos taurus (Bovine).